The primary structure comprises 523 residues: Monocarboxylate transporter 7 (523 aa).

The Cytoplasmic portion of the chain corresponds to 1–21 (MTQNKLKLCSKANVYTEVPDG). A helical membrane pass occupies residues 22 to 42 (GWGWAVAVSFFFVEVFTYGII). The Extracellular portion of the chain corresponds to 43 to 62 (KTFGVFFNDLMDSFNESNSR). A helical membrane pass occupies residues 63–83 (ISWIISICVFVLTFSAPLATV). Residues 84 to 91 (LSNRFGHR) lie on the Cytoplasmic side of the membrane. A helical transmembrane segment spans residues 92 to 112 (LVVMLGGLLVSTGMVAASFSQ). The Extracellular portion of the chain corresponds to 113–118 (EVSHMY). Residues 119–139 (VAIGIISGLGYCFSFLPTVTI) traverse the membrane as a helical segment. Residues 140 to 149 (LSQYFGKRRS) lie on the Cytoplasmic side of the membrane. The helical transmembrane segment at 150-170 (IVTAVASTGECFAVFAFAPAI) threads the bilayer. The Extracellular segment spans residues 171 to 184 (MALKERIGWRYSLL). A helical transmembrane segment spans residues 185-205 (FVGLLQLNIVIFGALLRPIFI). Residues 206 to 299 (RGPASPKIVI…KEKSFICYAL (94 aa)) are Cytoplasmic-facing. Residues Ser-234, Ser-237, Ser-240, and Ser-247 each carry the phosphoserine modification. Residues 300–320 (FGLFATLGFFAPSLYIIPLGI) traverse the membrane as a helical segment. The Extracellular segment spans residues 321-330 (SLGIDQDRAA). Residues 331–351 (FLLSTMAIAEVFGRIGAGFVL) traverse the membrane as a helical segment. Over 352–358 (NREPIRK) the chain is Cytoplasmic. The helical transmembrane segment at 359–379 (IYIELICVILLTVSLFAFTFA) threads the bilayer. At 380-381 (TE) the chain is on the extracellular side. The chain crosses the membrane as a helical span at residues 382 to 402 (FWGLMSCSIFFGFMVGTIGGT). Residues 403–423 (HIPLLAEDDVVGIEKMSSAAG) lie on the Cytoplasmic side of the membrane. A helical transmembrane segment spans residues 424–444 (VYIFIQSIAGLAGPPLAGLLV). Residues 445-452 (DQSKIYSR) are Extracellular-facing. A helical transmembrane segment spans residues 453 to 473 (AFYSCAAGMALAAVCLALVRP). At 474–523 (CKMGLCQHHHSGETKVVSHRGKTLQDIPEDFLEMDLAKNEHRVHVQMEPV) the chain is on the cytoplasmic side.

Belongs to the major facilitator superfamily. Monocarboxylate porter (TC 2.A.1.13) family. In terms of assembly, forms functional complexes with BSG/CD147 or EMB/GP70 ancillary proteins.

It localises to the basolateral cell membrane. It carries out the reaction taurine(out) = taurine(in). In terms of biological role, monocarboxylate transporter selective for taurine. May associate with BSG/CD147 or EMB/GP70 ancillary proteins to mediate facilitative efflux or influx of taurine across the plasma membrane. The transport is pH- and sodium-independent. Rather low-affinity, is likely effective for taurine transport in tissues where taurine is present at high concentrations. The sequence is that of Monocarboxylate transporter 7 from Homo sapiens (Human).